Consider the following 117-residue polypeptide: Large ribosomal subunit protein bL20 (117 aa).

This sequence belongs to the bacterial ribosomal protein bL20 family.

In terms of biological role, binds directly to 23S ribosomal RNA and is necessary for the in vitro assembly process of the 50S ribosomal subunit. It is not involved in the protein synthesizing functions of that subunit. This is Large ribosomal subunit protein bL20 from Nitratidesulfovibrio vulgaris (strain DP4) (Desulfovibrio vulgaris).